A 479-amino-acid chain; its full sequence is Inhibitory synaptic factor 2A (479 aa).

Serine 177 bears the Phosphoserine mark. Disordered stretches follow at residues glycine 226–arginine 247 and serine 315–threonine 338. Over residues alanine 228–serine 237 the composition is skewed to basic and acidic residues. Over residues cysteine 318–proline 337 the composition is skewed to polar residues. The stretch at threonine 353–leucine 379 forms a coiled coil. Residues serine 449 to lysine 461 show a composition bias toward polar residues. The segment at serine 449 to glycine 472 is disordered.

It belongs to the INSYN2 family. As to quaternary structure, interacts with GPHN.

The protein resides in the postsynaptic density. Component of the protein machinery at the inhibitory synapses, probably acting as a scaffold. Inhibitory synapses dampen neuronal activity through postsynaptic hyperpolarization. This synaptic inhibition is fundamental for the functioning of the central nervous system, shaping and orchestrating the flow of information through neuronal networks to generate a precise neural code. This is Inhibitory synaptic factor 2A from Homo sapiens (Human).